The following is a 369-amino-acid chain: Histone deacetylase-like amidohydrolase (369 aa).

Catalysis depends on His-143, which acts as the Proton donor/acceptor. Zn(2+)-binding residues include Asp-180, His-182, and Asp-268.

Belongs to the histone deacetylase family. As to quaternary structure, homotetramer; dimer of dimers. The cofactor is Zn(2+).

Zinc, and cobalt and nickel at a lesser extent, are able to increase the catalytic activity (2.2-, 1.3- and 1.1-fold respectively) at concentrations of 1 mM. Higher concentrations have an inhibitory effect. Magnesium, manganese and calcium have no effect on activity at concentrations between 0 and 10 mM. At 100 mM, the catalytic activity is increased between 1.2- and 2.1-fold. Hydroxamates like TSA and SAHA inhibit the enzyme. Is also inhibited by azobenzenes, stilbenes and arylazopyrazoles. Functionally, exhibits significant levels of protein deacetylase activity comparable to those of eukaryotic HDACs in assays both with fluorogenic peptidic substrates and acetate-radiolabeled histones. Accepts proteins with epsilon-acetylated lysine residues and tritiated-acetate-prelabeled chicken histones as substrates. The natural substrate protein is not yet known. In Alcaligenes sp. (strain DSM 11172) (Bordetella sp. (strain FB188)), this protein is Histone deacetylase-like amidohydrolase (hdaH).